Reading from the N-terminus, the 558-residue chain is Membrane protein insertase YidC (558 aa).

A run of 5 helical transmembrane segments spans residues I3–W23, F364–F384, L438–V458, P477–P497, and M508–L528.

It belongs to the OXA1/ALB3/YidC family. Type 1 subfamily. In terms of assembly, interacts with the Sec translocase complex via SecD. Specifically interacts with transmembrane segments of nascent integral membrane proteins during membrane integration.

It localises to the cell inner membrane. Required for the insertion and/or proper folding and/or complex formation of integral membrane proteins into the membrane. Involved in integration of membrane proteins that insert both dependently and independently of the Sec translocase complex, as well as at least some lipoproteins. Aids folding of multispanning membrane proteins. This is Membrane protein insertase YidC from Burkholderia mallei (strain NCTC 10247).